The primary structure comprises 437 residues: Elongation factor 1-gamma (437 aa).

A2 is subject to N-acetylalanine. The 86-residue stretch at 2–87 folds into the GST N-terminal domain; sequence AAGTLYTYPE…YVSNEELRGS (86 aa). One can recognise a GST C-terminal domain in the interval 88 to 216; that stretch reads TPEAAAQVVQ…VKLCEKMAQF (129 aa). N6-acetyllysine is present on residues K147 and K212. A compositionally biased stretch (basic and acidic residues) spans 221–254; the sequence is FAETQPKKDTPRKEKGSREEKQKPQAERKEEKKA. Residues 221 to 268 form a disordered region; it reads FAETQPKKDTPRKEKGSREEKQKPQAERKEEKKAAAPAPEEEMDECEQ. Residue K253 forms a Glycyl lysine isopeptide (Lys-Gly) (interchain with G-Cter in SUMO1) linkage. The EF-1-gamma C-terminal domain maps to 276–437; it reads AKDPFAHLPK…KAFNQGKIFK (162 aa). K285 is covalently cross-linked (Glycyl lysine isopeptide (Lys-Gly) (interchain with G-Cter in SUMO2)). Residue K401 is modified to N6-acetyllysine. An N6-acetyllysine; alternate modification is found at K434. N6-malonyllysine; alternate is present on K434.

As to quaternary structure, EF-1 is composed of four subunits: alpha, beta, delta, and gamma.

Its function is as follows. Probably plays a role in anchoring the complex to other cellular components. The chain is Elongation factor 1-gamma (EEF1G) from Macaca fascicularis (Crab-eating macaque).